A 477-amino-acid chain; its full sequence is MQVLHVCSEMFPLLKTGGLADVIGALPAVQIEDGVDARVLLPAFPDIRRGITDAQVVTRRDTFAGPITLLFGHYNGVGIYLIDAPHLYDRPGSPYHDTNLFAYTDNVIRFALLGWVGCEMACGLDPFWRPDVVHAHDWHAGLAPAYLAARGRPAKSVFTVHNLAYQGMFYAHHMDEIQLPWSFFNINGLEFNGQISFLKSGLYYADHITAVSPTYAREITEPQFAYGMEGLLQQRHREGRLSGVLNGVDEKIWSPETDLLLASRYTRDTLEEKAENKRQLQIAMGLKVDDKAPLFAVVSRLTSQKGLDLVLEALPGLLEQGGQLALLGAGDPVLQEGFLAAAAEHPGQVGVQIGYHEAFSHRIMGGADVILVPSRFEPCGLTQLYGLKYGTLPLVRRTGGLADTVSDSSLENLADGIASGFVFEDSNAWSLLRAIRRAFVLWSRPSLWRFVQRQAMSMDFSWHVAAKSYRELYYRLK.

Lysine 15 provides a ligand contact to ADP-alpha-D-glucose.

Belongs to the glycosyltransferase 1 family. Bacterial/plant glycogen synthase subfamily.

It carries out the reaction [(1-&gt;4)-alpha-D-glucosyl](n) + ADP-alpha-D-glucose = [(1-&gt;4)-alpha-D-glucosyl](n+1) + ADP + H(+). It participates in glycan biosynthesis; glycogen biosynthesis. Its function is as follows. Synthesizes alpha-1,4-glucan chains using ADP-glucose. The protein is Glycogen synthase of Escherichia fergusonii (strain ATCC 35469 / DSM 13698 / CCUG 18766 / IAM 14443 / JCM 21226 / LMG 7866 / NBRC 102419 / NCTC 12128 / CDC 0568-73).